The following is a 75-amino-acid chain: Small, acid-soluble spore protein Tlp (75 aa).

The protein belongs to the Tlp family.

The protein resides in the spore core. The protein is Small, acid-soluble spore protein Tlp of Geobacillus kaustophilus (strain HTA426).